A 210-amino-acid chain; its full sequence is Thymidylate kinase (210 aa).

9-16 is a binding site for ATP; sequence GLEGAGKS.

Belongs to the thymidylate kinase family.

It carries out the reaction dTMP + ATP = dTDP + ADP. Its function is as follows. Phosphorylation of dTMP to form dTDP in both de novo and salvage pathways of dTTP synthesis. The protein is Thymidylate kinase of Aliivibrio salmonicida (strain LFI1238) (Vibrio salmonicida (strain LFI1238)).